Here is a 455-residue protein sequence, read N- to C-terminus: Protein FAM124B (455 aa).

Phosphoserine is present on Ser-49. Residues 270 to 322 (TSVSAKRTSEPRSQRNQGKRSQGHSLELPEPSGSPTSDRCAGTSWKSPGRSFQ) form a disordered region. Residues 313–322 (SWKSPGRSFQ) show a composition bias toward polar residues.

This sequence belongs to the FAM124 family. In terms of assembly, interacts with CHD7 and CHD8.

Its subcellular location is the nucleus. This is Protein FAM124B (FAM124B) from Homo sapiens (Human).